The primary structure comprises 376 residues: Chaperone protein DnaJ (376 aa).

Residues 4-68 enclose the J domain; sequence DYYEILGVAR…ETRARYDRFG (65 aa). A disordered region spans residues 102-121; the sequence is GGMGGPTQQRRRGGPARGDD. The CR-type zinc-finger motif lies at 136 to 218; the sequence is GGEKEIRISH…CDGKGTNQVT (83 aa). Zn(2+)-binding residues include Cys-149, Cys-152, Cys-166, Cys-169, Cys-192, Cys-195, Cys-206, and Cys-209. 4 CXXCXGXG motif repeats span residues 149–156, 166–173, 192–199, and 206–213; these read CETCSGSG, CSTCSGSG, CPTCNGTG, and CDACDGKG.

Belongs to the DnaJ family. As to quaternary structure, homodimer. The cofactor is Zn(2+).

Its subcellular location is the cytoplasm. Its function is as follows. Participates actively in the response to hyperosmotic and heat shock by preventing the aggregation of stress-denatured proteins and by disaggregating proteins, also in an autonomous, DnaK-independent fashion. Unfolded proteins bind initially to DnaJ; upon interaction with the DnaJ-bound protein, DnaK hydrolyzes its bound ATP, resulting in the formation of a stable complex. GrpE releases ADP from DnaK; ATP binding to DnaK triggers the release of the substrate protein, thus completing the reaction cycle. Several rounds of ATP-dependent interactions between DnaJ, DnaK and GrpE are required for fully efficient folding. Also involved, together with DnaK and GrpE, in the DNA replication of plasmids through activation of initiation proteins. In Trichormus variabilis (strain ATCC 29413 / PCC 7937) (Anabaena variabilis), this protein is Chaperone protein DnaJ.